A 437-amino-acid polypeptide reads, in one-letter code: MSMFLDTAKISVQAGRGGDGMVAFRREKYVPNGGPWGGDGGKGGSVIFRVDEGLRTLMDFRYNRKFKAKSGEKGMTKGMHGRGAEDLIVFVPQGTTVRDAETGKVITDLVEHGQEVVIAKGGRGGRGNIRFATPRNPAPEIAENGEPGEERQLELELKILADVGLVGFPSVGKSTLLSVVSSAKPKIGAYHFTTIVPNLGMVRTKSGDSFAMADLPGLIEGASQGVGLGTQFLRHIERTRVILHVIDMSASEGRDPYEDYVSINNELETYNLRLMERPQIIVANKMDMPEAQENLKAFKKKLAAQYDEFDDLPMIFPISSLAHQGLDNLLEATAELLAKTDEFLLYDEADLVDEEAYYGFAETEKNFEIIRDDDATWVLSGEKLERLFVMTNMERDESIMKFARQLRGMGVDEALRERGAKDGDLVRIGKFEFEFVD.

The Obg domain maps to 2-160 (SMFLDTAKIS…RQLELELKIL (159 aa)). The region spanning 161–338 (ADVGLVGFPS…LLEATAELLA (178 aa)) is the OBG-type G domain. Residues 167–174 (GFPSVGKS), 192–196 (FTTIV), 214–217 (DLPG), 284–287 (NKMD), and 319–321 (SSL) each bind GTP. The Mg(2+) site is built by serine 174 and threonine 194. Residues 359-437 (GFAETEKNFE…IGKFEFEFVD (79 aa)) form the OCT domain.

It belongs to the TRAFAC class OBG-HflX-like GTPase superfamily. OBG GTPase family. Monomer. It depends on Mg(2+) as a cofactor.

Its subcellular location is the cytoplasm. In terms of biological role, an essential GTPase which binds GTP, GDP and possibly (p)ppGpp with moderate affinity, with high nucleotide exchange rates and a fairly low GTP hydrolysis rate. Plays a role in control of the cell cycle, stress response, ribosome biogenesis and in those bacteria that undergo differentiation, in morphogenesis control. In Streptococcus pyogenes serotype M49 (strain NZ131), this protein is GTPase Obg.